Consider the following 358-residue polypeptide: 3-dehydroquinate synthase (358 aa).

NAD(+) contacts are provided by residues 70–75 (DGEAHK), 104–108 (GVIGD), 128–129 (TT), lysine 141, and lysine 150. 3 residues coordinate Zn(2+): glutamate 183, histidine 246, and histidine 263.

This sequence belongs to the sugar phosphate cyclases superfamily. Dehydroquinate synthase family. Requires NAD(+) as cofactor. Co(2+) is required as a cofactor. Zn(2+) serves as cofactor.

The protein localises to the cytoplasm. It carries out the reaction 7-phospho-2-dehydro-3-deoxy-D-arabino-heptonate = 3-dehydroquinate + phosphate. Its pathway is metabolic intermediate biosynthesis; chorismate biosynthesis; chorismate from D-erythrose 4-phosphate and phosphoenolpyruvate: step 2/7. Catalyzes the conversion of 3-deoxy-D-arabino-heptulosonate 7-phosphate (DAHP) to dehydroquinate (DHQ). The sequence is that of 3-dehydroquinate synthase from Bordetella bronchiseptica (strain ATCC BAA-588 / NCTC 13252 / RB50) (Alcaligenes bronchisepticus).